The sequence spans 319 residues: Olfactory receptor 2S2 (319 aa).

At 1–26 the chain is on the extracellular side; that stretch reads MEKANETSPVMGFVLLRLSAHPELEK. A glycan (N-linked (GlcNAc...) asparagine) is linked at asparagine 5. A helical transmembrane segment spans residues 27-50; sequence TFFVLILLMYLVILLGNGVLILVT. Residues 51–58 are Cytoplasmic-facing; that stretch reads ILDSRLHT. Residues 59 to 80 traverse the membrane as a helical segment; it reads PMYFFLGNLSFLDICFTTSSVP. Over 81-101 the chain is Extracellular; it reads LVLDSFLTPQETISFSACAVQ. A disulfide bridge connects residues cysteine 98 and cysteine 190. Residues 102–121 traverse the membrane as a helical segment; it reads MALSFAMAGTECLLLSMMAF. Topologically, residues 122-140 are cytoplasmic; sequence DRYVAICNPLRYSVIMSKA. A helical membrane pass occupies residues 141-159; the sequence is AYMPMAASSWAIGGAASVV. The Extracellular portion of the chain corresponds to 160-196; that stretch reads HTSLAIQLPFCGDNVINHFTCEILAVLKLACADISIN. A helical transmembrane segment spans residues 197–220; sequence VISMEVTNVIFLGVPVLFISFSYV. At 221–237 the chain is on the cytoplasmic side; the sequence is FIITTILRIPSAEGRKK. The chain crosses the membrane as a helical span at residues 238–260; that stretch reads VFSTCSAHLTVVIVFYGTLFFMY. Residues 261–279 are Extracellular-facing; it reads GKPKSKDSMGADKEDLSDK. The chain crosses the membrane as a helical span at residues 280-299; sequence LIPLFYGVVTPMLNPIIYSL. Residues 300–319 are Cytoplasmic-facing; that stretch reads RNKDVKAAVRRLLRPKGFTQ.

It belongs to the G-protein coupled receptor 1 family.

It is found in the cell membrane. Odorant receptor. The polypeptide is Olfactory receptor 2S2 (OR2S2) (Homo sapiens (Human)).